The chain runs to 423 residues: Histidine--tRNA ligase (423 aa).

The protein belongs to the class-II aminoacyl-tRNA synthetase family. In terms of assembly, homodimer.

It is found in the cytoplasm. The catalysed reaction is tRNA(His) + L-histidine + ATP = L-histidyl-tRNA(His) + AMP + diphosphate + H(+). The protein is Histidine--tRNA ligase of Staphylococcus haemolyticus (strain JCSC1435).